A 621-amino-acid polypeptide reads, in one-letter code: 1-deoxy-D-xylulose-5-phosphate synthase (621 aa).

Residues H80 and 121 to 123 contribute to the thiamine diphosphate site; that span reads GHS. D152 provides a ligand contact to Mg(2+). Residues 153–154, N181, Y288, and E370 each bind thiamine diphosphate; that span reads GA. N181 serves as a coordination point for Mg(2+).

Belongs to the transketolase family. DXPS subfamily. In terms of assembly, homodimer. It depends on Mg(2+) as a cofactor. Requires thiamine diphosphate as cofactor.

It carries out the reaction D-glyceraldehyde 3-phosphate + pyruvate + H(+) = 1-deoxy-D-xylulose 5-phosphate + CO2. It participates in metabolic intermediate biosynthesis; 1-deoxy-D-xylulose 5-phosphate biosynthesis; 1-deoxy-D-xylulose 5-phosphate from D-glyceraldehyde 3-phosphate and pyruvate: step 1/1. In terms of biological role, catalyzes the acyloin condensation reaction between C atoms 2 and 3 of pyruvate and glyceraldehyde 3-phosphate to yield 1-deoxy-D-xylulose-5-phosphate (DXP). In Aeromonas hydrophila subsp. hydrophila (strain ATCC 7966 / DSM 30187 / BCRC 13018 / CCUG 14551 / JCM 1027 / KCTC 2358 / NCIMB 9240 / NCTC 8049), this protein is 1-deoxy-D-xylulose-5-phosphate synthase.